The following is a 210-amino-acid chain: HTH-type transcriptional repressor FabR (210 aa).

One can recognise an HTH tetR-type domain in the interval 10-70; that stretch reads KTRRSLVEAA…TMVDESGLML (61 aa). The segment at residues 33–52 is a DNA-binding region (H-T-H motif); that stretch reads SLREVAREAGIAPTSFYRHF.

As to quaternary structure, homodimer.

It localises to the cytoplasm. Its function is as follows. Represses the transcription of fabB, involved in unsaturated fatty acid (UFA) biosynthesis. By controlling UFA production, FabR directly influences the physical properties of the membrane bilayer. In Citrobacter koseri (strain ATCC BAA-895 / CDC 4225-83 / SGSC4696), this protein is HTH-type transcriptional repressor FabR.